We begin with the raw amino-acid sequence, 155 residues long: 6,7-dimethyl-8-ribityllumazine synthase (155 aa).

Residues Phe-18, 49–51 (ALE), and 75–77 (CVI) contribute to the 5-amino-6-(D-ribitylamino)uracil site. 80-81 (ET) lines the (2S)-2-hydroxy-3-oxobutyl phosphate pocket. The Proton donor role is filled by His-83. 5-amino-6-(D-ribitylamino)uracil is bound at residue Asn-108. Arg-122 contacts (2S)-2-hydroxy-3-oxobutyl phosphate.

Belongs to the DMRL synthase family.

It catalyses the reaction (2S)-2-hydroxy-3-oxobutyl phosphate + 5-amino-6-(D-ribitylamino)uracil = 6,7-dimethyl-8-(1-D-ribityl)lumazine + phosphate + 2 H2O + H(+). It participates in cofactor biosynthesis; riboflavin biosynthesis; riboflavin from 2-hydroxy-3-oxobutyl phosphate and 5-amino-6-(D-ribitylamino)uracil: step 1/2. Functionally, catalyzes the formation of 6,7-dimethyl-8-ribityllumazine by condensation of 5-amino-6-(D-ribitylamino)uracil with 3,4-dihydroxy-2-butanone 4-phosphate. This is the penultimate step in the biosynthesis of riboflavin. The chain is 6,7-dimethyl-8-ribityllumazine synthase from Bartonella henselae (strain ATCC 49882 / DSM 28221 / CCUG 30454 / Houston 1) (Rochalimaea henselae).